An 857-amino-acid chain; its full sequence is DNA mismatch repair protein MutS (857 aa).

Residue 613–620 coordinates ATP; sequence GPNMGGKS. The interval 797-820 is disordered; that stretch reads TSLPHEQPAAHKAKDAPQVPHQSD.

This sequence belongs to the DNA mismatch repair MutS family.

Functionally, this protein is involved in the repair of mismatches in DNA. It is possible that it carries out the mismatch recognition step. This protein has a weak ATPase activity. This is DNA mismatch repair protein MutS from Pseudomonas putida (strain ATCC 700007 / DSM 6899 / JCM 31910 / BCRC 17059 / LMG 24140 / F1).